Consider the following 380-residue polypeptide: DNA replication and repair protein RecF (380 aa).

ATP is bound at residue 30–37 (GNNAQGKS).

This sequence belongs to the RecF family.

The protein resides in the cytoplasm. Its function is as follows. The RecF protein is involved in DNA metabolism; it is required for DNA replication and normal SOS inducibility. RecF binds preferentially to single-stranded, linear DNA. It also seems to bind ATP. The polypeptide is DNA replication and repair protein RecF (Crocosphaera subtropica (strain ATCC 51142 / BH68) (Cyanothece sp. (strain ATCC 51142))).